The following is a 69-amino-acid chain: Large ribosomal subunit protein uL29 (69 aa).

It belongs to the universal ribosomal protein uL29 family.

The protein is Large ribosomal subunit protein uL29 of Sulfolobus acidocaldarius (strain ATCC 33909 / DSM 639 / JCM 8929 / NBRC 15157 / NCIMB 11770).